Reading from the N-terminus, the 506-residue chain is Glutamate--tRNA ligase (506 aa).

The short motif at 21–31 (PSPTGTPHVGM) is the 'HIGH' region element. The short motif at 265 to 269 (KLSKR) is the 'KMSKS' region element. Lysine 268 contributes to the ATP binding site.

This sequence belongs to the class-I aminoacyl-tRNA synthetase family. Glutamate--tRNA ligase type 1 subfamily. As to quaternary structure, monomer.

It localises to the cytoplasm. It catalyses the reaction tRNA(Glu) + L-glutamate + ATP = L-glutamyl-tRNA(Glu) + AMP + diphosphate. In terms of biological role, catalyzes the attachment of glutamate to tRNA(Glu) in a two-step reaction: glutamate is first activated by ATP to form Glu-AMP and then transferred to the acceptor end of tRNA(Glu). The chain is Glutamate--tRNA ligase from Bifidobacterium longum (strain DJO10A).